A 100-amino-acid chain; its full sequence is Co-chaperonin GroES (100 aa).

Belongs to the GroES chaperonin family. As to quaternary structure, heptamer of 7 subunits arranged in a ring. Interacts with the chaperonin GroEL.

Its subcellular location is the cytoplasm. Its function is as follows. Together with the chaperonin GroEL, plays an essential role in assisting protein folding. The GroEL-GroES system forms a nano-cage that allows encapsulation of the non-native substrate proteins and provides a physical environment optimized to promote and accelerate protein folding. GroES binds to the apical surface of the GroEL ring, thereby capping the opening of the GroEL channel. The polypeptide is Co-chaperonin GroES (Nocardia farcinica (strain IFM 10152)).